The primary structure comprises 212 residues: Protein GrpE (212 aa).

Residues M1–S69 form a disordered region. Over residues E40–L60 the composition is skewed to low complexity.

This sequence belongs to the GrpE family. As to quaternary structure, homodimer.

The protein localises to the cytoplasm. Functionally, participates actively in the response to hyperosmotic and heat shock by preventing the aggregation of stress-denatured proteins, in association with DnaK and GrpE. It is the nucleotide exchange factor for DnaK and may function as a thermosensor. Unfolded proteins bind initially to DnaJ; upon interaction with the DnaJ-bound protein, DnaK hydrolyzes its bound ATP, resulting in the formation of a stable complex. GrpE releases ADP from DnaK; ATP binding to DnaK triggers the release of the substrate protein, thus completing the reaction cycle. Several rounds of ATP-dependent interactions between DnaJ, DnaK and GrpE are required for fully efficient folding. The protein is Protein GrpE of Leptospira interrogans serogroup Icterohaemorrhagiae serovar Lai (strain 56601).